Consider the following 116-residue polypeptide: Co-chaperonin GroES (116 aa).

Belongs to the GroES chaperonin family. As to quaternary structure, heptamer of 7 subunits arranged in a ring. Interacts with the chaperonin GroEL.

The protein resides in the cytoplasm. Functionally, together with the chaperonin GroEL, plays an essential role in assisting protein folding. The GroEL-GroES system forms a nano-cage that allows encapsulation of the non-native substrate proteins and provides a physical environment optimized to promote and accelerate protein folding. GroES binds to the apical surface of the GroEL ring, thereby capping the opening of the GroEL channel. The chain is Co-chaperonin GroES from Mycoplasma pneumoniae (strain ATCC 29342 / M129 / Subtype 1) (Mycoplasmoides pneumoniae).